The following is a 496-amino-acid chain: Alpha-amylase (496 aa).

Cys-29 and Cys-85 form a disulfide bridge. 3 residues coordinate Ca(2+): Asn-99, Arg-155, and Asp-164. Arg-192 serves as a coordination point for chloride. The active-site Nucleophile is the Asp-194. His-198 serves as a coordination point for Ca(2+). Glu-230 functions as the Proton donor in the catalytic mechanism. Arg-332 contributes to the chloride binding site. Cystine bridges form between Cys-374–Cys-380 and Cys-448–Cys-460.

It belongs to the glycosyl hydrolase 13 family. As to quaternary structure, monomer. Ca(2+) serves as cofactor. The cofactor is chloride. Disulfide bonds are present.

Its subcellular location is the secreted. The enzyme catalyses Endohydrolysis of (1-&gt;4)-alpha-D-glucosidic linkages in polysaccharides containing three or more (1-&gt;4)-alpha-linked D-glucose units.. Inhibited by alpha-amylase inhibitors from wheat and rye. The most effective inhibitors are the wheat tetrameric alpha-amylase inhibitor (WTAI) and the rye dimeric alpha-amylase inhibitor (RDAI-1). Not inhibited by alpha-amylase inhibitor from barley. In terms of biological role, aids in the digestion of starch and glycogen derived from food, such as skin scales, fungi and bacteria. The chain is Alpha-amylase from Dermatophagoides pteronyssinus (European house dust mite).